Here is a 107-residue protein sequence, read N- to C-terminus: UPF0145 protein YbjQ (107 aa).

It belongs to the UPF0145 family.

The protein is UPF0145 protein YbjQ of Shigella flexneri.